The primary structure comprises 596 residues: Probable lysosomal cobalamin transporter (596 aa).

A run of 10 helical transmembrane segments spans residues 13–33 (IWVAYAVAVALVLLVAIITTF), 45–65 (VSIVAIVSLTSLLATVFLLPV), 99–119 (VVYYTLYSFDALLCLIVIPFA), 150–170 (LGFVFLVLILFLLGFFVPAAG), 201–221 (LLITLGTFLYTLYTGAGLALL), 318–338 (LLGGILLLLLSILVWASMLIT), 353–373 (GYILGHINVFQPVNWIFVQSA), 381–401 (ILMALLVLFFFGSSITGIATI), 425–445 (IATVMLALIILAINYAIAMIV), and 512–532 (VFGAIDFWAQFAFLGVFMVVF). N543 is a glycosylation site (N-linked (GlcNAc...) asparagine). Residues 576–596 (GRAKNRNGYGTGGGEGSNGRG) are disordered. Residues 584-596 (YGTGGGEGSNGRG) show a composition bias toward gly residues.

This sequence belongs to the LIMR family. LMBRD1 subfamily.

It localises to the lysosome membrane. In terms of biological role, probable lysosomal cobalamin transporter. Required to export cobalamin from lysosomes allowing its conversion to cofactors. The sequence is that of Probable lysosomal cobalamin transporter from Podospora anserina (strain S / ATCC MYA-4624 / DSM 980 / FGSC 10383) (Pleurage anserina).